The primary structure comprises 308 residues: Porphobilinogen deaminase (308 aa).

Cysteine 240 bears the S-(dipyrrolylmethanemethyl)cysteine mark.

This sequence belongs to the HMBS family. As to quaternary structure, monomer. Requires dipyrromethane as cofactor.

It catalyses the reaction 4 porphobilinogen + H2O = hydroxymethylbilane + 4 NH4(+). It participates in porphyrin-containing compound metabolism; protoporphyrin-IX biosynthesis; coproporphyrinogen-III from 5-aminolevulinate: step 2/4. Functionally, tetrapolymerization of the monopyrrole PBG into the hydroxymethylbilane pre-uroporphyrinogen in several discrete steps. This is Porphobilinogen deaminase from Laribacter hongkongensis (strain HLHK9).